The primary structure comprises 325 residues: Elongation factor P--(R)-beta-lysine ligase (325 aa).

Ser-76–Glu-78 is a substrate binding site. ATP-binding positions include Arg-100–Glu-102 and Asn-109. Tyr-118 serves as a coordination point for substrate. Residue Glu-244–Leu-245 participates in ATP binding. Glu-251 contacts substrate. Gly-300 contacts ATP.

Belongs to the class-II aminoacyl-tRNA synthetase family. EpmA subfamily. In terms of assembly, homodimer.

It carries out the reaction D-beta-lysine + L-lysyl-[protein] + ATP = N(6)-((3R)-3,6-diaminohexanoyl)-L-lysyl-[protein] + AMP + diphosphate + H(+). In terms of biological role, with EpmB is involved in the beta-lysylation step of the post-translational modification of translation elongation factor P (EF-P). Catalyzes the ATP-dependent activation of (R)-beta-lysine produced by EpmB, forming a lysyl-adenylate, from which the beta-lysyl moiety is then transferred to the epsilon-amino group of a conserved specific lysine residue in EF-P. The polypeptide is Elongation factor P--(R)-beta-lysine ligase (Hamiltonella defensa subsp. Acyrthosiphon pisum (strain 5AT)).